We begin with the raw amino-acid sequence, 1188 residues long: Meiotically up-regulated gene 190 protein (1188 aa).

Over residues 1–11 (MSTHSGDSTKQ) the composition is skewed to polar residues. Disordered stretches follow at residues 1–61 (MSTH…DPIT) and 83–125 (FTVP…EADN). Residues 41–61 (EKKEEQQREQTENEKLFDPIT) are compositionally biased toward basic and acidic residues. A compositionally biased stretch (polar residues) spans 84 to 112 (TVPNQSIQGSSLPSEKPYLSSNQPTNVYK). Residues 173-193 (LVISWFFTHSIIISAVLPLAI) traverse the membrane as a helical segment. In terms of domain architecture, SMP-LTD spans 228 to 453 (IPESAEWMNH…SPKSMTIDLS (226 aa)). Positions 298 to 318 (ASESFSEKQASEAEHKDEPEQ) are disordered. The segment covering 302 to 318 (FSEKQASEAEHKDEPEQ) has biased composition (basic and acidic residues). C2 domains are found at residues 451 to 576 (DLSK…ERCD) and 636 to 781 (KEEE…TKWY). Ca(2+) contacts are provided by aspartate 485, aspartate 491, aspartate 544, aspartate 546, serine 549, and aspartate 552. 2 disordered regions span residues 615-639 (TIPR…KEEE) and 1002-1066 (QRAS…GTMN). Serine 1005 is subject to Phosphoserine. Residues 1022–1032 (DDSVDTEDEET) are compositionally biased toward acidic residues.

It depends on Ca(2+) as a cofactor.

It is found in the cytoplasm. It localises to the endoplasmic reticulum membrane. The protein resides in the nucleus membrane. Its subcellular location is the cytoskeleton. The protein localises to the microtubule organizing center. It is found in the spindle pole body. In terms of biological role, has a role in meiosis. The chain is Meiotically up-regulated gene 190 protein (mug190) from Schizosaccharomyces pombe (strain 972 / ATCC 24843) (Fission yeast).